Consider the following 92-residue polypeptide: Small ribosomal subunit protein uS19 (92 aa).

It belongs to the universal ribosomal protein uS19 family.

Protein S19 forms a complex with S13 that binds strongly to the 16S ribosomal RNA. The polypeptide is Small ribosomal subunit protein uS19 (Shewanella halifaxensis (strain HAW-EB4)).